The chain runs to 374 residues: 4-hydroxybenzoate polyprenyltransferase, mitochondrial (374 aa).

Residues 1-63 (MLRLGGAGLV…RALSLSAAAV (63 aa)) constitute a mitochondrion transit peptide. The Mitochondrial matrix segment spans residues 64-83 (VNSAPRPLQPYLRLMRLDKP). A helical transmembrane segment spans residues 84–104 (IGTWLLYLPCTWSIGLAADPG). The Mitochondrial intermembrane portion of the chain corresponds to 105-108 (CFPD). A helical membrane pass occupies residues 109–129 (WYMLSLFGTGAILMRGAGCTI). Residues 130–153 (NDMWDRDFDKKVERTANRPIAAGD) lie on the Mitochondrial matrix side of the membrane. A helical membrane pass occupies residues 154-174 (ISAFQSFVFLGAQLTLALGVL). The Mitochondrial intermembrane portion of the chain corresponds to 175–176 (LH). The chain crosses the membrane as a helical span at residues 177–197 (LNYYSIAMGAASLLLVVTYPL). Over 198 to 200 (MKR) the chain is Mitochondrial matrix. The chain crosses the membrane as a helical span at residues 201 to 221 (VTFWPQLALGLTFNWGALLGW). The Mitochondrial intermembrane portion of the chain corresponds to 222 to 230 (SAVKGSCDP). The helical transmembrane segment at 231–251 (AVCLPLYFSGVMWTLIYDTIY) threads the bilayer. Residues 252–277 (AHQDKKDDALIGLKSTALLFRENTKQ) lie on the Mitochondrial matrix side of the membrane. Residues 278–298 (WLSGFGVAMVGALSLVGASSG) traverse the membrane as a helical segment. Residues 299–300 (QT) are Mitochondrial intermembrane-facing. The chain crosses the membrane as a helical span at residues 301–321 (LPYYAAVAAVGAHLAHQIYTV). Topologically, residues 322 to 332 (DIHRAEDCWEK) are mitochondrial matrix. Residues 333-353 (FTSNRTVGLLLFLGIVLGNLY) form a helical membrane-spanning segment. The Mitochondrial intermembrane portion of the chain corresponds to 354–374 (KDKPDETKGVDAVGEESERTS).

The protein belongs to the UbiA prenyltransferase family. It depends on Mg(2+) as a cofactor.

It is found in the mitochondrion inner membrane. It catalyses the reaction an all-trans-polyprenyl diphosphate + 4-hydroxybenzoate = a 4-hydroxy-3-(all-trans-polyprenyl)benzoate + diphosphate. The catalysed reaction is all-trans-decaprenyl diphosphate + 4-hydroxybenzoate = 4-hydroxy-3-(all-trans-decaprenyl)benzoate + diphosphate. The enzyme catalyses all-trans-nonaprenyl diphosphate + 4-hydroxybenzoate = 4-hydroxy-3-(all-trans-nonaprenyl)benzoate + diphosphate. The protein operates within cofactor biosynthesis; ubiquinone biosynthesis. Its function is as follows. Mediates the second step in the final reaction sequence of coenzyme Q (CoQ) biosynthesis. Catalyzes the prenylation of para-hydroxybenzoate (PHB) with an all-trans polyprenyl group (such as all-trans-nonaprenyl diphosphate). The length of the polyprenyl side chain varies depending on the species, in humans, the side chain is comprised of 10 isoprenyls producing CoQ10 (also known as ubiquinone), whereas rodents predominantly generate CoQ9. However, this specificity is not complete, human tissues have low amounts of CoQ9 and rodent organs contain some CoQ10. Plays a central role in the biosynthesis of CoQ9. CoQ9 is a vital molecule that transports electrons from mitochondrial respiratory chain complexes. CoQs also function as cofactors for uncoupling protein and plays a role as regulator of the extracellularly-induced ceramide-dependent apoptotic pathway. Regulates mitochondrial permeability transition pore (mPTP) opening and ROS production (pivotal events in cell death) in a tissue specific manner. The sequence is that of 4-hydroxybenzoate polyprenyltransferase, mitochondrial from Rattus norvegicus (Rat).